A 94-amino-acid polypeptide reads, in one-letter code: Integration host factor subunit beta (94 aa).

Belongs to the bacterial histone-like protein family. As to quaternary structure, heterodimer of an alpha and a beta chain.

This protein is one of the two subunits of integration host factor, a specific DNA-binding protein that functions in genetic recombination as well as in transcriptional and translational control. In Salmonella arizonae (strain ATCC BAA-731 / CDC346-86 / RSK2980), this protein is Integration host factor subunit beta.